A 190-amino-acid polypeptide reads, in one-letter code: uncharacterized protein (190 aa).

This sequence to Synechocystis PCC 6803 sll1609 and slr1290.

This is an uncharacterized protein from Synechocystis sp. (strain ATCC 27184 / PCC 6803 / Kazusa).